A 158-amino-acid chain; its full sequence is Lipoprotein signal peptidase (158 aa).

Transmembrane regions (helical) follow at residues 4-24, 63-83, and 88-108; these read KYYITISLIVAIAILIIDQVT, KMGFFYIITIVILIVLVLFYI, and YNLFMQVAISLLFAGALGNFI. Catalysis depends on residues aspartate 118 and aspartate 136. A helical membrane pass occupies residues 131 to 151; sequence IFNVADSSLTIGVLFIIIALL.

The protein belongs to the peptidase A8 family.

It is found in the cell membrane. It carries out the reaction Release of signal peptides from bacterial membrane prolipoproteins. Hydrolyzes -Xaa-Yaa-Zaa-|-(S,diacylglyceryl)Cys-, in which Xaa is hydrophobic (preferably Leu), and Yaa (Ala or Ser) and Zaa (Gly or Ala) have small, neutral side chains.. It functions in the pathway protein modification; lipoprotein biosynthesis (signal peptide cleavage). Its function is as follows. This protein specifically catalyzes the removal of signal peptides from prolipoproteins. This is Lipoprotein signal peptidase from Staphylococcus haemolyticus (strain JCSC1435).